Here is a 154-residue protein sequence, read N- to C-terminus: UPF0178 protein RC1_2062 (154 aa).

Belongs to the UPF0178 family.

This is UPF0178 protein RC1_2062 from Rhodospirillum centenum (strain ATCC 51521 / SW).